Consider the following 398-residue polypeptide: MYTDKGANSDRMEFNTSKEVTVAPTFEDMHLKESLLRGIYAYGYESPSAVQSRAIVQICKGRDTIAQAQSGTGKTATFSISILQVIDTVVRESQALVLSPTRELATQIQSVIMALGDYMNVQCHACIGGTNIGEDIRKLDYGQHVVSGTPGRVADMIRRRHLRTRHIKMLVLDEADELLNRGFREQIYDVYRYLPPATQVVVVSATLPYDVLDMTTKFMTDPVRVLVKRDELTLEGIKQYFIAVEKEEWKFDTLCDLYDTLTITQAVIFCNTRRKVDWLTDKMREANFTVSSMHGEMPQKERDSIMQDFRQGNSRVLISTDVWARGIDVQQVSLVINYDLPTNRENYIHRIGRSGRFGRKGVAINFVTSDDVRILRDIELYYSTQIDEMPMNVADLLS.

A Q motif motif is present at residues 24–52 (PTFEDMHLKESLLRGIYAYGYESPSAVQS). The Helicase ATP-binding domain occupies 55 to 225 (IVQICKGRDT…TKFMTDPVRV (171 aa)). 68-75 (AQSGTGKT) serves as a coordination point for ATP. Positions 173–176 (DEAD) match the DEAD box motif. In terms of domain architecture, Helicase C-terminal spans 236 to 397 (GIKQYFIAVE…EMPMNVADLL (162 aa)).

This sequence belongs to the DEAD box helicase family. DDX48/FAL1 subfamily.

Its subcellular location is the nucleus. It localises to the nucleolus. It carries out the reaction ATP + H2O = ADP + phosphate + H(+). Functionally, ATP-dependent RNA helicase involved in 40S ribosomal subunit biogenesis. Required for the processing and cleavage of 35S pre-rRNA at sites A0, A1, and A2, leading to mature 18S rRNA. In Aspergillus oryzae (strain ATCC 42149 / RIB 40) (Yellow koji mold), this protein is ATP-dependent RNA helicase fal1 (fal1).